Here is a 179-residue protein sequence, read N- to C-terminus: Large ribosomal subunit protein uL5 (179 aa).

It belongs to the universal ribosomal protein uL5 family. As to quaternary structure, part of the 50S ribosomal subunit; part of the 5S rRNA/L5/L18/L25 subcomplex. Contacts the 5S rRNA and the P site tRNA. Forms a bridge to the 30S subunit in the 70S ribosome.

Functionally, this is one of the proteins that bind and probably mediate the attachment of the 5S RNA into the large ribosomal subunit, where it forms part of the central protuberance. In the 70S ribosome it contacts protein S13 of the 30S subunit (bridge B1b), connecting the 2 subunits; this bridge is implicated in subunit movement. Contacts the P site tRNA; the 5S rRNA and some of its associated proteins might help stabilize positioning of ribosome-bound tRNAs. In Agathobacter rectalis (strain ATCC 33656 / DSM 3377 / JCM 17463 / KCTC 5835 / VPI 0990) (Eubacterium rectale), this protein is Large ribosomal subunit protein uL5.